A 308-amino-acid chain; its full sequence is Large ribosomal subunit protein mL38 (308 aa).

A mitochondrion-targeting transit peptide spans 1 to 17 (MKRVWPRIPTISNVCRA).

Belongs to the phosphatidylethanolamine-binding protein family. Mitochondrion-specific ribosomal protein mL38 subfamily. As to quaternary structure, component of the mitochondrial large ribosomal subunit (mt-LSU). Mature yeast 74S mitochondrial ribosomes consist of a small (37S) and a large (54S) subunit. The 37S small subunit contains a 15S ribosomal RNA (15S mt-rRNA) and at least 32 different proteins. The 54S large subunit contains a 21S rRNA (21S mt-rRNA) and at least 45 different proteins.

Its subcellular location is the mitochondrion. Its function is as follows. Component of the mitochondrial ribosome (mitoribosome), a dedicated translation machinery responsible for the synthesis of mitochondrial genome-encoded proteins, including at least some of the essential transmembrane subunits of the mitochondrial respiratory chain. The mitoribosomes are attached to the mitochondrial inner membrane and translation products are cotranslationally integrated into the membrane. The chain is Large ribosomal subunit protein mL38 (mrpl35) from Schizosaccharomyces pombe (strain 972 / ATCC 24843) (Fission yeast).